Here is a 222-residue protein sequence, read N- to C-terminus: Superoxide dismutase [Mn], mitochondrial (222 aa).

The N-terminal 24 residues, 1-24 (MLSRAVCGTGRQLAPALGYLGSRQ), are a transit peptide targeting the mitochondrion. Residue histidine 50 participates in Mn(2+) binding. 3'-nitrotyrosine is present on tyrosine 58. 2 positions are modified to N6-acetyllysine; alternate: lysine 68 and lysine 75. N6-succinyllysine; alternate occurs at positions 68 and 75. Histidine 98 provides a ligand contact to Mn(2+). Lysine 114 is modified (N6-acetyllysine). Residues lysine 122 and lysine 130 each carry the N6-acetyllysine; alternate modification. Residues lysine 122 and lysine 130 each carry the N6-succinyllysine; alternate modification. Mn(2+)-binding residues include aspartate 183 and histidine 187. Residue lysine 202 is modified to N6-acetyllysine.

Belongs to the iron/manganese superoxide dismutase family. Homotetramer. Mn(2+) serves as cofactor. In terms of processing, nitrated under oxidative stress. Nitration coupled with oxidation inhibits the catalytic activity. Post-translationally, acetylation at Lys-122 decreases enzymatic activity. Deacetylated by SIRT3 upon exposure to ionizing radiations or after long fasting. Polyubiquitinated; leading to proteasomal degradation. Deubiquitinated by USP36 which increases protein stability.

Its subcellular location is the mitochondrion matrix. The enzyme catalyses 2 superoxide + 2 H(+) = H2O2 + O2. Its function is as follows. Destroys superoxide anion radicals which are normally produced within the cells and which are toxic to biological systems. This Macaca nemestrina (Pig-tailed macaque) protein is Superoxide dismutase [Mn], mitochondrial (SOD2).